We begin with the raw amino-acid sequence, 438 residues long: Phosphatidylserine decarboxylase proenzyme 1, mitochondrial (438 aa).

Residues M1–P21 constitute a mitochondrion transit peptide. The Mitochondrial matrix segment spans residues C22–P48. Residues G49–Y67 traverse the membrane as a helical segment. The Mitochondrial intermembrane portion of the chain corresponds to E68–E438. Residues D173, H273, and S387 each act as charge relay system; for autoendoproteolytic cleavage activity in the active site. The active-site Schiff-base intermediate with substrate; via pyruvic acid; for decarboxylase activity is the S387. S387 carries the pyruvic acid (Ser); by autocatalysis modification.

Belongs to the phosphatidylserine decarboxylase family. PSD-B subfamily. Eukaryotic type I sub-subfamily. As to quaternary structure, heterodimer of a large membrane-associated beta subunit and a small pyruvoyl-containing alpha subunit. Pyruvate serves as cofactor. Post-translationally, is synthesized initially as an inactive proenzyme. Formation of the active enzyme involves a self-maturation process in which the active site pyruvoyl group is generated from an internal serine residue via an autocatalytic post-translational modification. Two non-identical subunits are generated from the proenzyme in this reaction, and the pyruvate is formed at the N-terminus of the alpha chain, which is derived from the carboxyl end of the proenzyme. The autoendoproteolytic cleavage occurs by a canonical serine protease mechanism, in which the side chain hydroxyl group of the serine supplies its oxygen atom to form the C-terminus of the beta chain, while the remainder of the serine residue undergoes an oxidative deamination to produce ammonia and the pyruvoyl prosthetic group on the alpha chain. During this reaction, the Ser that is part of the protease active site of the proenzyme becomes the pyruvoyl prosthetic group, which constitutes an essential element of the active site of the mature decarboxylase.

It is found in the mitochondrion inner membrane. The catalysed reaction is a 1,2-diacyl-sn-glycero-3-phospho-L-serine + H(+) = a 1,2-diacyl-sn-glycero-3-phosphoethanolamine + CO2. The protein operates within phospholipid metabolism; phosphatidylethanolamine biosynthesis; phosphatidylethanolamine from CDP-diacylglycerol: step 2/2. Catalyzes the formation of phosphatidylethanolamine (PtdEtn) from phosphatidylserine (PtdSer). Plays a central role in phospholipid metabolism and in the interorganelle trafficking of phosphatidylserine. This chain is Phosphatidylserine decarboxylase proenzyme 1, mitochondrial (PSD1), found in Oryza sativa subsp. japonica (Rice).